The primary structure comprises 1199 residues: Chromatin structure-remodeling complex subunit snf21 (1199 aa).

The region spanning 256 to 328 (QRSDRERRLK…AKQRLQALKE (73 aa)) is the HSA domain. One can recognise a Helicase ATP-binding domain in the interval 429 to 594 (ISLYNNHLNG…WALLNFVLPR (166 aa)). 442 to 449 (DEMGLGKT) is an ATP binding site. The short motif at 544–547 (DEGH) is the DEGH box element. The 164-residue stretch at 740–903 (LLDRILPKLF…STPEEREAFL (164 aa)) folds into the Helicase C-terminal domain. The segment at 1017-1059 (MESEARPTRGRPKRNIASVDETPALTLNGKPKKKRGPAPDTLT) is disordered. Residues 1061 to 1171 (EHRSLLRRVC…TAMETKIEEL (111 aa)) form the Bromo domain.

This sequence belongs to the SNF2/RAD54 helicase family. In terms of assembly, component of the RSC complex composed of at least arp9, arp42, rsc1, rsc4, rsc7, rsc9, rsc58, sfh1, snf21, ssr1, ssr2, ssr3 and ssr4. The complex interacts with histone and histone variant components of centromeric chromatin.

The protein localises to the nucleus. Functionally, helicase. Component of the chromatin structure remodeling complex (RSC), which is involved in transcription regulation and nucleosome positioning. Controls particularly membrane and organelle development genes. This Schizosaccharomyces pombe (strain 972 / ATCC 24843) (Fission yeast) protein is Chromatin structure-remodeling complex subunit snf21 (snf21).